A 58-amino-acid polypeptide reads, in one-letter code: UPF0509 protein YciZ (58 aa).

The protein belongs to the UPF0509 family.

This chain is UPF0509 protein YciZ, found in Escherichia fergusonii (strain ATCC 35469 / DSM 13698 / CCUG 18766 / IAM 14443 / JCM 21226 / LMG 7866 / NBRC 102419 / NCTC 12128 / CDC 0568-73).